The following is a 515-amino-acid chain: Bifunctional solanapyrone synthase (515 aa).

Residues 1 to 25 (MRLIILNLLSLGITPSVVGHSGPHR) form the signal peptide. N-linked (GlcNAc...) asparagine glycosylation occurs at Asn66. Positions 91–261 (APKNPACIYT…THIVQRTYPL (171 aa)) constitute an FAD-binding PCMH-type domain. The residue at position 128 (His128) is a Pros-8alpha-FAD histidine. Asn274 and Asn355 each carry an N-linked (GlcNAc...) asparagine glycan.

The protein belongs to the oxygen-dependent FAD-linked oxidoreductase family. The cofactor is FAD.

The catalysed reaction is prosolanapyrone II + O2 = prosolanapyrone III + H2O2. The enzyme catalyses prosolanapyrone III = (-)-solanapyrone A. It carries out the reaction prosolanapyrone III = solanapyrone D. The protein operates within phytotoxin biosynthesis. In terms of biological role, bifunctional solanapyrone synthase; part of the gene cluster that mediates the biosynthesis of the phytotoxin solanapyrone, a causal agent of early blight disease of potato and tomato. The prosolanapyrone synthase sol1 is a polyketide synthase that produces the octaketide desmethylprosolanapyrone I via sequential condensations of 7 malonyl-CoA units with one acetyl-CoA unit, and one methylation step. The octaketide backbone is further methylated by the sol2 O-methyltransferase to yield prosolanapyrone I. Prosolanapyrone I is hydroxylated to prosolanapyrone II by the cytochrome P450 monooxygenase sol6. The solanapyrone synthase sol5 then catalyzes the oxidation of prosolanapyrone II and the subsequent Diels Alder cycloisomerization of the product prosolanapyrone III to solanapyrones A and D. Solanapyrones A and D are then converted into solanapyrones B and E, respectively, by the sol3 dehydrogenase. This chain is Bifunctional solanapyrone synthase (sol5), found in Alternaria solani.